A 312-amino-acid polypeptide reads, in one-letter code: Olfactory receptor 1493 (312 aa).

Topologically, residues 1-23 (MNNKTVITHFLLLGLPIPPEHQQ) are extracellular. The N-linked (GlcNAc...) asparagine glycan is linked to asparagine 3. A helical transmembrane segment spans residues 24–48 (LFFALFLIMYLTTFLGNLLIVVLVQ). Residues 49 to 55 (LDSHLHT) lie on the Cytoplasmic side of the membrane. A helical transmembrane segment spans residues 56-77 (PMYLFLSNLSFSDLCFSSVTML). Topologically, residues 78-98 (KLLQNIQSQVPSISYAGCLTQ) are extracellular. A disulfide bridge links cysteine 95 with cysteine 187. A helical transmembrane segment spans residues 99–118 (IFFFLLFGYLGNFLLVAMAY). Topologically, residues 119 to 137 (DRYVAICFPLHYTNIMSHK) are cytoplasmic. A helical membrane pass occupies residues 138–156 (LCTCLLLVFWIMTSSHAMM). The Extracellular segment spans residues 157 to 194 (HTLLAARLSFCENNVLLNFFCDLFVLLKLACSDTYVNE). Residues 195 to 217 (LMIHIMGVIIIVIPFVLIVISYA) traverse the membrane as a helical segment. At 218-234 (KIISSILKVPSTQSIHK) the chain is on the cytoplasmic side. The chain crosses the membrane as a helical span at residues 235 to 258 (VFSTCGSHLSVVSLFYGTIIGLYL). Residues 259–270 (CPSGDNFSLKGS) are Extracellular-facing. A helical transmembrane segment spans residues 271–290 (AMAMMYTVVTPMLNPFIYSL). Residues 291–312 (RNRDMKQALIRVTCSKKISLPW) lie on the Cytoplasmic side of the membrane.

Belongs to the G-protein coupled receptor 1 family. As to expression, olfactory epithelium.

It is found in the cell membrane. In terms of biological role, odorant receptor. The sequence is that of Olfactory receptor 1493 (Olr1493) from Rattus norvegicus (Rat).